The following is a 611-amino-acid chain: Dihydroxy-acid dehydratase (611 aa).

Aspartate 81 lines the Mg(2+) pocket. Cysteine 122 provides a ligand contact to [2Fe-2S] cluster. Residues aspartate 123 and lysine 124 each contribute to the Mg(2+) site. Residue lysine 124 is modified to N6-carboxylysine. Cysteine 195 contributes to the [2Fe-2S] cluster binding site. Glutamate 491 lines the Mg(2+) pocket. Residue serine 517 is the Proton acceptor of the active site.

It belongs to the IlvD/Edd family. Homodimer. It depends on [2Fe-2S] cluster as a cofactor. The cofactor is Mg(2+).

It carries out the reaction (2R)-2,3-dihydroxy-3-methylbutanoate = 3-methyl-2-oxobutanoate + H2O. It catalyses the reaction (2R,3R)-2,3-dihydroxy-3-methylpentanoate = (S)-3-methyl-2-oxopentanoate + H2O. The protein operates within amino-acid biosynthesis; L-isoleucine biosynthesis; L-isoleucine from 2-oxobutanoate: step 3/4. It functions in the pathway amino-acid biosynthesis; L-valine biosynthesis; L-valine from pyruvate: step 3/4. Functionally, functions in the biosynthesis of branched-chain amino acids. Catalyzes the dehydration of (2R,3R)-2,3-dihydroxy-3-methylpentanoate (2,3-dihydroxy-3-methylvalerate) into 2-oxo-3-methylpentanoate (2-oxo-3-methylvalerate) and of (2R)-2,3-dihydroxy-3-methylbutanoate (2,3-dihydroxyisovalerate) into 2-oxo-3-methylbutanoate (2-oxoisovalerate), the penultimate precursor to L-isoleucine and L-valine, respectively. The sequence is that of Dihydroxy-acid dehydratase from Agrobacterium fabrum (strain C58 / ATCC 33970) (Agrobacterium tumefaciens (strain C58)).